Reading from the N-terminus, the 125-residue chain is Small ribosomal subunit protein uS12 (125 aa).

D89 carries the post-translational modification 3-methylthioaspartic acid.

Belongs to the universal ribosomal protein uS12 family. Part of the 30S ribosomal subunit. Contacts proteins S8 and S17. May interact with IF1 in the 30S initiation complex.

Its function is as follows. With S4 and S5 plays an important role in translational accuracy. Interacts with and stabilizes bases of the 16S rRNA that are involved in tRNA selection in the A site and with the mRNA backbone. Located at the interface of the 30S and 50S subunits, it traverses the body of the 30S subunit contacting proteins on the other side and probably holding the rRNA structure together. The combined cluster of proteins S8, S12 and S17 appears to hold together the shoulder and platform of the 30S subunit. The chain is Small ribosomal subunit protein uS12 from Bordetella avium (strain 197N).